A 330-amino-acid chain; its full sequence is Probable integrase/recombinase protein MJ0367 (330 aa).

Residues Ile-22–Arg-112 form the Core-binding (CB) domain. A Tyr recombinase domain is found at Gln-136 to Lys-325. Residues Arg-177, Lys-202, His-275, Arg-278, and His-301 contribute to the active site. Tyr-310 (O-(3'-phospho-DNA)-tyrosine intermediate) is an active-site residue.

This sequence belongs to the 'phage' integrase family.

The chain is Probable integrase/recombinase protein MJ0367 from Methanocaldococcus jannaschii (strain ATCC 43067 / DSM 2661 / JAL-1 / JCM 10045 / NBRC 100440) (Methanococcus jannaschii).